Reading from the N-terminus, the 333-residue chain is Fe-S cluster assembly protein dre2 (333 aa).

Residues 1-29 form a disordered region; sequence MSPITLDLTSDFNPANTTGAGSSSSQPRT. The segment covering 7–28 has biased composition (polar residues); it reads DLTSDFNPANTTGAGSSSSQPR. The segment at 23–158 is N-terminal SAM-like domain; the sequence is SSSQPRTLLV…KPDYAEEEAV (136 aa). Residues 159 to 225 are linker; it reads PLRFGLKRKT…EDTLLTEADL (67 aa). The [2Fe-2S] cluster site is built by C235, C246, C249, and C251. The segment at 235-251 is fe-S binding site A; it reads CQPKPGKKRRACKDCTC. C296, C299, C307, and C310 together coordinate [4Fe-4S] cluster. 2 short sequence motifs (cx2C motif) span residues 296–299 and 307–310; these read CGSC and CAGC. A fe-S binding site B region spans residues 296-310; the sequence is CGSCALGDAFRCAGC.

This sequence belongs to the anamorsin family. As to quaternary structure, monomer. Interacts with tah18. Interacts with mia40. It depends on [2Fe-2S] cluster as a cofactor. [4Fe-4S] cluster serves as cofactor.

The protein resides in the cytoplasm. Its subcellular location is the mitochondrion intermembrane space. Component of the cytosolic iron-sulfur (Fe-S) protein assembly (CIA) machinery required for the maturation of extramitochondrial Fe-S proteins. Part of an electron transfer chain functioning in an early step of cytosolic Fe-S biogenesis, facilitating the de novo assembly of a [4Fe-4S] cluster on the scaffold complex cfd1-nbp35. Electrons are transferred to dre2 from NADPH via the FAD- and FMN-containing protein tah18. Tah18-dre2 are also required for the assembly of the diferric tyrosyl radical cofactor of ribonucleotide reductase (RNR), probably by providing electrons for reduction during radical cofactor maturation in the catalytic small subunit rnr2. The sequence is that of Fe-S cluster assembly protein dre2 from Neurospora crassa (strain ATCC 24698 / 74-OR23-1A / CBS 708.71 / DSM 1257 / FGSC 987).